A 462-amino-acid polypeptide reads, in one-letter code: EPD1-interacting receptor-like cytoplasmic serine/threonine-protein kinase 5A (462 aa).

A Protein kinase domain is found at 85-366 (FSSANFLGEG…DVVNILEPLL (282 aa)). ATP-binding positions include 91–99 (LGEGGFGPV) and lysine 120. A phosphotyrosine mark is found at tyrosine 165 and tyrosine 167. Aspartate 215 acts as the Proton acceptor in catalysis.

It belongs to the protein kinase superfamily. Ser/Thr protein kinase family. As to quaternary structure, interacts with the Verticillium dahliae elicitor EPD1 (AC G2WWH6). Phosphorylated at Tyr-165 and Tyr-167 in the presence of pathogen-associated molecular patterns (PAMPs); this triggers the expression of pathogenesis-related genes (e.g. PR5 and PR16). Mostly expressed in roots and, to a lesser extent, in leaves.

It is found in the cell membrane. It carries out the reaction L-seryl-[protein] + ATP = O-phospho-L-seryl-[protein] + ADP + H(+). The enzyme catalyses L-threonyl-[protein] + ATP = O-phospho-L-threonyl-[protein] + ADP + H(+). Required for pathogen-associated molecular pattern (PAMP, e.g. chitin and flg22)-triggered immunity (PTI) involving reactive oxygen species (ROS) accumulation and triggering plant defense, including defense-related gene expression (e.g. PR1 and LOX). Ensures specific recognition of the EPD1 effector of Verticillium dahliae, resulting in a hypersensitive response known as effector-triggered immunity (ETI), characterized by the activation of programmed cell death to limit infection by the pathogen. Priming plants with the incompatible pathogen V.dahliae leads to an increased resistance to compatible pathogens, as a result of systemic acquired resistance (SAR). In Gossypium barbadense (Sea Island cotton), this protein is EPD1-interacting receptor-like cytoplasmic serine/threonine-protein kinase 5A.